Consider the following 163-residue polypeptide: Bursicon (163 aa).

Positions 1 to 23 are cleaved as a signal peptide; the sequence is MKSSVCVLLKVLACILLPGGLNA. 5 cysteine pairs are disulfide-bonded: cysteine 39-cysteine 88, cysteine 53-cysteine 102, cysteine 63-cysteine 123, cysteine 67-cysteine 125, and cysteine 85-cysteine 128. A CTCK domain is found at 39–129; it reads CQVTPVIHVL…PLECMCRPCT (91 aa).

In terms of assembly, heterodimer of burs and pburs.

It is found in the secreted. In terms of biological role, final heterodimeric neurohormone released at the end of the molting cycle, involved in the sclerotization (tanning) of the insect cuticle, melanization and wing spreading. This chain is Bursicon, found in Aedes aegypti (Yellowfever mosquito).